Consider the following 504-residue polypeptide: Phosphoenolpyruvate carboxylase (504 aa).

A compositionally biased stretch (polar residues) spans 1–16 (MTSRKIPSIMGTQHPD). A disordered region spans residues 1–21 (MTSRKIPSIMGTQHPDNANAP).

The protein belongs to the PEPCase type 2 family. In terms of assembly, homotetramer. The cofactor is Mg(2+).

The enzyme catalyses oxaloacetate + phosphate = phosphoenolpyruvate + hydrogencarbonate. Its function is as follows. Catalyzes the irreversible beta-carboxylation of phosphoenolpyruvate (PEP) to form oxaloacetate (OAA), a four-carbon dicarboxylic acid source for the tricarboxylic acid cycle. The polypeptide is Phosphoenolpyruvate carboxylase (Leuconostoc mesenteroides subsp. mesenteroides (strain ATCC 8293 / DSM 20343 / BCRC 11652 / CCM 1803 / JCM 6124 / NCDO 523 / NBRC 100496 / NCIMB 8023 / NCTC 12954 / NRRL B-1118 / 37Y)).